Here is a 422-residue protein sequence, read N- to C-terminus: UDP-N-acetylglucosamine 1-carboxyvinyltransferase (422 aa).

22–23 lines the phosphoenolpyruvate pocket; that stretch reads KN. Arg-94 contacts UDP-N-acetyl-alpha-D-glucosamine. Residue Cys-118 is the Proton donor of the active site. Cys-118 carries the post-translational modification 2-(S-cysteinyl)pyruvic acid O-phosphothioketal. Residues 123–127, Asp-308, and Ile-330 contribute to the UDP-N-acetyl-alpha-D-glucosamine site; that span reads RPVDL.

Belongs to the EPSP synthase family. MurA subfamily.

The protein localises to the cytoplasm. It carries out the reaction phosphoenolpyruvate + UDP-N-acetyl-alpha-D-glucosamine = UDP-N-acetyl-3-O-(1-carboxyvinyl)-alpha-D-glucosamine + phosphate. It functions in the pathway cell wall biogenesis; peptidoglycan biosynthesis. Functionally, cell wall formation. Adds enolpyruvyl to UDP-N-acetylglucosamine. The polypeptide is UDP-N-acetylglucosamine 1-carboxyvinyltransferase (Dinoroseobacter shibae (strain DSM 16493 / NCIMB 14021 / DFL 12)).